The sequence spans 122 residues: Small ribosomal subunit protein uS13 (122 aa).

The segment at 99 to 122 is disordered; that stretch reads RGQRTHTNARTRKGPAKAIAGKKK.

Belongs to the universal ribosomal protein uS13 family. In terms of assembly, part of the 30S ribosomal subunit. Forms a loose heterodimer with protein S19. Forms two bridges to the 50S subunit in the 70S ribosome.

Located at the top of the head of the 30S subunit, it contacts several helices of the 16S rRNA. In the 70S ribosome it contacts the 23S rRNA (bridge B1a) and protein L5 of the 50S subunit (bridge B1b), connecting the 2 subunits; these bridges are implicated in subunit movement. Contacts the tRNAs in the A and P-sites. The chain is Small ribosomal subunit protein uS13 from Sinorhizobium medicae (strain WSM419) (Ensifer medicae).